Reading from the N-terminus, the 283-residue chain is Phosphatidylglycerol--prolipoprotein diacylglyceryl transferase (283 aa).

A run of 7 helical transmembrane segments spans residues 21–41, 60–80, 95–115, 124–144, 176–196, 203–223, and 239–259; these read LAVR…LWLA, LLFA…VLFY, VWTG…AMLW, FFTI…AGRL, SQLY…NWFI, GAVS…VEYV, and MGQI…LWAF. R143 contacts a 1,2-diacyl-sn-glycero-3-phospho-(1'-sn-glycerol).

The protein belongs to the Lgt family.

It localises to the cell inner membrane. The enzyme catalyses L-cysteinyl-[prolipoprotein] + a 1,2-diacyl-sn-glycero-3-phospho-(1'-sn-glycerol) = an S-1,2-diacyl-sn-glyceryl-L-cysteinyl-[prolipoprotein] + sn-glycerol 1-phosphate + H(+). It functions in the pathway protein modification; lipoprotein biosynthesis (diacylglyceryl transfer). Its function is as follows. Catalyzes the transfer of the diacylglyceryl group from phosphatidylglycerol to the sulfhydryl group of the N-terminal cysteine of a prolipoprotein, the first step in the formation of mature lipoproteins. This is Phosphatidylglycerol--prolipoprotein diacylglyceryl transferase from Aliivibrio fischeri (strain MJ11) (Vibrio fischeri).